The primary structure comprises 468 residues: Glutamate--tRNA ligase (468 aa).

Residues 11–21 carry the 'HIGH' region motif; sequence PSPTGFIHLGN. A 'KMSKS' region motif is present at residues 243-247; the sequence is KMSKR. ATP is bound at residue Lys-246.

The protein belongs to the class-I aminoacyl-tRNA synthetase family. Glutamate--tRNA ligase type 1 subfamily. Monomer.

It is found in the cytoplasm. It carries out the reaction tRNA(Glu) + L-glutamate + ATP = L-glutamyl-tRNA(Glu) + AMP + diphosphate. Catalyzes the attachment of glutamate to tRNA(Glu) in a two-step reaction: glutamate is first activated by ATP to form Glu-AMP and then transferred to the acceptor end of tRNA(Glu). In Cupriavidus pinatubonensis (strain JMP 134 / LMG 1197) (Cupriavidus necator (strain JMP 134)), this protein is Glutamate--tRNA ligase.